Reading from the N-terminus, the 506-residue chain is Steroid (22S)-hydroxylase (506 aa).

The helical transmembrane segment at 12 to 32 (LLFFLPFILLALLTFYTTTVA) threads the bilayer. Heme is bound at residue Cys-449.

Belongs to the cytochrome P450 family. Heme is required as a cofactor.

The protein resides in the membrane. The catalysed reaction is a C28-steroid + reduced [NADPH--hemoprotein reductase] + O2 = a (22S)-22-hydroxy C28-steroid + oxidized [NADPH--hemoprotein reductase] + H2O + H(+). It catalyses the reaction campesterol + reduced [NADPH--hemoprotein reductase] + O2 = (22S)-22-hydroxycampesterol + oxidized [NADPH--hemoprotein reductase] + H2O + H(+). The enzyme catalyses campestanol + reduced [NADPH--hemoprotein reductase] + O2 = 6-deoxycathasterone + oxidized [NADPH--hemoprotein reductase] + H2O + H(+). The protein operates within plant hormone biosynthesis; brassinosteroid biosynthesis. Catalyzes the C22-alpha-hydroxylation step in brassinosteroid biosynthesis, which is the rate-limiting step in this biosynthetic pathway. Catalyzes the conversion of campesterol (CR) to (22S)-22-hydroxycampesterol (22-OHCR, 22-hydroxyCR) and of campestanol (CN) to 6-deoxocathasterone (6-deoxoCT). This Oryza sativa subsp. indica (Rice) protein is Steroid (22S)-hydroxylase.